Here is a 742-residue protein sequence, read N- to C-terminus: Pyriculol/pyriculariol biosynthesis cluster transcription factor 1 (742 aa).

Residues 23-49 (CVLCQHRKIKCDRSFPCANCQRANVQC) constitute a DNA-binding region (zn(2)-C6 fungal-type). A disordered region spans residues 85-116 (GKPDIARLTTKRSSLSQSPPKGEEPLPEWNRH). The span at 105 to 116 (KGEEPLPEWNRH) shows a compositional bias: basic and acidic residues.

Its subcellular location is the nucleus. Functionally, transcriptional regulator; part of the gene cluster that mediates the biosynthesis of pyriculol and pyriculariol, two heptaketides that induce lesion formation upon application on rice leaves but are dispensable for pathogenicity. With TRF2, negatively regulates the expression of the gene cluster and the subsequent pyriculol and pyriculariol production. This chain is Pyriculol/pyriculariol biosynthesis cluster transcription factor 1, found in Pyricularia oryzae (strain 70-15 / ATCC MYA-4617 / FGSC 8958) (Rice blast fungus).